Consider the following 168-residue polypeptide: Disulfide bond formation protein B (168 aa).

Residues 1 to 11 (MSNPMRPVRSI) lie on the Cytoplasmic side of the membrane. Residues 12 to 28 (LLAIFTGCAGLIGYALY) traverse the membrane as a helical segment. Residues 29–46 (LQLVENLLPCPLCVVQRM) lie on the Periplasmic side of the membrane. C38 and C41 are oxidised to a cystine. The helical transmembrane segment at 47–63 (AYWLIGLTALAGFFHTP) threads the bilayer. The Cytoplasmic portion of the chain corresponds to 64 to 69 (ETTGRR). Residues 70–87 (IYAGLMAVFAFTGGLVAL) traverse the membrane as a helical segment. The Periplasmic segment spans residues 88–143 (RQAWLVRYPEAFECGISPEEAFLNALPLARWWPVMFEANGDCADVTWKFASLTLPD). The cysteines at positions 101 and 129 are disulfide-linked. Residues 144-162 (WSAIFFMILAALSIYVLLV) traverse the membrane as a helical segment. Topologically, residues 163–168 (RENQRE) are cytoplasmic.

This sequence belongs to the DsbB family.

The protein localises to the cell inner membrane. Its function is as follows. Required for disulfide bond formation in some periplasmic proteins. Acts by oxidizing the DsbA protein. The chain is Disulfide bond formation protein B from Nitrosospira multiformis (strain ATCC 25196 / NCIMB 11849 / C 71).